The following is a 172-amino-acid chain: C-phycocyanin beta chain (172 aa).

An N4-methylasparagine modification is found at asparagine 72. Positions 82 and 153 each coordinate (2R,3E)-phycocyanobilin.

It belongs to the phycobiliprotein family. In terms of assembly, heterodimer of an alpha and a beta subunit, which further assembles into trimers and the trimers into hexamers. The basic functional unit of phycobiliproteins is a ring-shaped hexamer formed from two back-to-back trimers contacting via the alpha chain subunits. The trimers are composed of alpha/beta subunit heterodimers arranged around a three-fold axis of symmetry. The phycoerythrins also contain a gamma subunit which is located in the center of the hexamer. Post-translationally, contains two covalently linked phycocyanobilin chromophores.

Its subcellular location is the plastid. It is found in the cyanelle thylakoid membrane. Light-harvesting photosynthetic bile pigment-protein from the phycobiliprotein complex (phycobilisome, PBS). Phycocyanin is the major phycobiliprotein in the PBS rod. The protein is C-phycocyanin beta chain (cpcB) of Cyanophora paradoxa.